The following is a 159-amino-acid chain: Transmembrane protein 42 (159 aa).

4 helical membrane-spanning segments follow: residues 37–57, 68–88, 100–120, and 124–144; these read FWGV…AASA, GFCV…WTFF, IASV…GFVL, and CQEV…TLIH.

It localises to the membrane. This is Transmembrane protein 42 (TMEM42) from Bos taurus (Bovine).